The primary structure comprises 454 residues: Aquaporin-7 (454 aa).

Residues 1–71 (MNINEPRDGG…LHLHNKTRNH (71 aa)) lie on the Cytoplasmic side of the membrane. The chain crosses the membrane as a helical span at residues 72–92 (FVATVAEFAGTTLFLFFAFSG). Over 93–115 (TQVALLATPANDSNVVGTPSNPA) the chain is Extracellular. Asparagine 103 carries N-linked (GlcNAc...) asparagine glycosylation. A helical membrane pass occupies residues 116-136 (QLLYVSLCFGFSLAVNAWVFF). Over 137-163 (RISGGLFNPAVTMGMCIVGALPYFRGL) the chain is Cytoplasmic. Residues 144-146 (NPA) carry the NPA 1 motif. Residues 164-184 (LLIFAQIIGGIAAAAIVSALF) form a helical membrane-spanning segment. The Extracellular segment spans residues 185–202 (PGPITFRTSLGGGTSIVQ). The chain crosses the membrane as a helical span at residues 203–223 (GLFIEMFLTAELVFTIFMLAA). Topologically, residues 224–229 (EKHKGT) are cytoplasmic. The helical transmembrane segment at 230–250 (FIAPIGIGLSLFIAELTGVYF) threads the bilayer. Topologically, residues 251 to 274 (TGGSVNPARSFGPSVVSGQFTGYH) are extracellular. The NPA 2 motif lies at 256 to 258 (NPA). A helical membrane pass occupies residues 275 to 295 (WIYWVGPILGAILASAFYKFI). The Cytoplasmic portion of the chain corresponds to 296–454 (KMLEYETANP…ENLRDNTHNN (159 aa)). The disordered stretch occupies residues 343–454 (GASHVHENGN…ENLRDNTHNN (112 aa)).

It belongs to the MIP/aquaporin (TC 1.A.8) family.

The protein resides in the membrane. The catalysed reaction is H2O(in) = H2O(out). Its function is as follows. Water channel required to facilitate the transport of water across membranes. Involved in conidiation. This Botryotinia fuckeliana (strain B05.10) (Noble rot fungus) protein is Aquaporin-7.